The chain runs to 987 residues: 110 kDa U5 small nuclear ribonucleoprotein component CLO (987 aa).

Positions 1-54 (MESSLYDEFGNYVGPEIESDRDSDDEVEDEDLQDKHLEENGSDGEQGPGGSNGW) are disordered. Over residues 17-32 (IESDRDSDDEVEDEDL) the composition is skewed to acidic residues. The 287-residue stretch at 136–422 (ALVRNVALVG…LGVTLSNSAY (287 aa)) folds into the tr-type G domain. The segment at 145–152 (GHLQHGKT) is G1. 145–152 (GHLQHGKT) contacts GTP. The interval 189-193 (NISIK) is G2. Residues 215 to 218 (DTPG) are G3. GTP contacts are provided by residues 215–219 (DTPGH) and 269–272 (NKVD). The G4 stretch occupies residues 269-272 (NKVD). The segment at 395–397 (YSQ) is G5.

Belongs to the TRAFAC class translation factor GTPase superfamily. Classic translation factor GTPase family. As to quaternary structure, interacts with BRR2A and PRP8A. As to expression, expressed in flower buds, open flowers and siliques. Expressed at low levels in rosettes leaves, cauline leaves and stems.

It is found in the nucleus speckle. In terms of biological role, splicing factor involved in pre-mRNA splicing and component of the spliceosome. Essential for reproduction. In female gametophyte, is necessary for the egg cell and central cell fate determination and hence reproductive success. Involved in a mechanism that prevents accessory cells from adopting gametic cell fate. Is necessary to restrict LIS expression to interfere with egg-cell specification. Probable component of U5 small nuclear ribonucleoprotein (snRNP) that is required for pre-mRNA splicing. Plays an essential role in female gametogenesis and embryo development. Required for the control of polarized cell growth and cell proliferation during floral organ morphogenesis. This chain is 110 kDa U5 small nuclear ribonucleoprotein component CLO, found in Arabidopsis thaliana (Mouse-ear cress).